The sequence spans 375 residues: GDSL esterase/lipase At5g45960 (375 aa).

The first 28 residues, 1-28 (MRSHHRHFSSYVSFILFLFLFFISFSSS), serve as a signal peptide directing secretion. Ser54 serves as the catalytic Nucleophile. Asn340 carries N-linked (GlcNAc...) asparagine glycosylation. Residues Asp348 and His351 contribute to the active site.

It belongs to the 'GDSL' lipolytic enzyme family.

The protein localises to the secreted. The protein is GDSL esterase/lipase At5g45960 of Arabidopsis thaliana (Mouse-ear cress).